We begin with the raw amino-acid sequence, 562 residues long: Arginine--tRNA ligase (562 aa).

The short motif at Pro-121 to His-131 is the 'HIGH' region element.

The protein belongs to the class-I aminoacyl-tRNA synthetase family. Monomer.

It localises to the cytoplasm. It catalyses the reaction tRNA(Arg) + L-arginine + ATP = L-arginyl-tRNA(Arg) + AMP + diphosphate. The sequence is that of Arginine--tRNA ligase from Streptococcus uberis (strain ATCC BAA-854 / 0140J).